The chain runs to 360 residues: Chorismate synthase (360 aa).

NADP(+) is bound by residues arginine 48 and arginine 54. FMN is bound by residues 125-127 (RSS), 246-247 (NA), glycine 286, 301-305 (KPTSS), and arginine 327.

Belongs to the chorismate synthase family. As to quaternary structure, homotetramer. The cofactor is FMNH2.

The catalysed reaction is 5-O-(1-carboxyvinyl)-3-phosphoshikimate = chorismate + phosphate. The protein operates within metabolic intermediate biosynthesis; chorismate biosynthesis; chorismate from D-erythrose 4-phosphate and phosphoenolpyruvate: step 7/7. Functionally, catalyzes the anti-1,4-elimination of the C-3 phosphate and the C-6 proR hydrogen from 5-enolpyruvylshikimate-3-phosphate (EPSP) to yield chorismate, which is the branch point compound that serves as the starting substrate for the three terminal pathways of aromatic amino acid biosynthesis. This reaction introduces a second double bond into the aromatic ring system. The protein is Chorismate synthase of Actinobacillus pleuropneumoniae serotype 7 (strain AP76).